Here is a 660-residue protein sequence, read N- to C-terminus: Solute carrier family 5 member 4 (660 aa).

Residues 1 to 28 are Cytoplasmic-facing; the sequence is MASTLSPSTVTKTPGPPEISERIQNAAD. Residues 29-47 form a helical membrane-spanning segment; it reads ISVIVIYFVVVMAVGLWAM. At 48–64 the chain is on the extracellular side; the sequence is LRTNRGTVGGFFLAGRD. The chain crosses the membrane as a helical span at residues 65–85; sequence VTWWPMGASLFASNIGSGHFV. The Cytoplasmic portion of the chain corresponds to 86-105; that stretch reads GLAGTGAASGIAIAAFEWNA. Residues 106–126 form a helical membrane-spanning segment; it reads LLLLLVLGWFFVPIYIKAGVM. Residues 127–171 lie on the Extracellular side of the membrane; the sequence is TMPEYLRKRFGGKRLQIYLSILSLFICVALRISSDIFSGAIFIKL. A helical transmembrane segment spans residues 172-191; sequence ALGLDLYLAIFSLLAITAIY. The Cytoplasmic segment spans residues 192–208; that stretch reads TITGGLASVIYTDTLQT. A helical transmembrane segment spans residues 209–229; that stretch reads IIMLIGSFILMGFAFVEVGGY. Over 230–270 the chain is Extracellular; sequence ESFTEKYMNAIPTIVEGDNLTISPKCYTPQGDSFHIFRDAV. Asn248 carries an N-linked (GlcNAc...) asparagine glycan. Residues 271-291 traverse the membrane as a helical segment; that stretch reads TGDIPWPGMIFGMTVVAAWYW. The Cytoplasmic segment spans residues 292-314; that stretch reads CTDQVIVQRCLSGKDMSHVKAAC. The chain crosses the membrane as a helical span at residues 315 to 334; that stretch reads IMCGYLKLLPMFLMVMPGMI. The Extracellular portion of the chain corresponds to 335–423; it reads SRILYTEKVA…RKQASEKELL (89 aa). A helical transmembrane segment spans residues 424-443; the sequence is IAGRLFIILLIVISIVWVPL. The Cytoplasmic portion of the chain corresponds to 444–455; that stretch reads VQVAQNGQLFHY. A helical transmembrane segment spans residues 456-476; that stretch reads IESISSYLGPPIAAVFLLAIF. The Extracellular segment spans residues 477 to 526; it reads CKRVNEQGAFWGLIIGFVMGLIRMIAEFVYGTGSCLAASNCPQIICGVHY. Residues 527–547 form a helical membrane-spanning segment; the sequence is LYFALILFFVSILVVLAISLL. Residues 548–638 are Cytoplasmic-facing; sequence TKPIPDVHLY…TDTSEKPLWK (91 aa). A helical membrane pass occupies residues 639-659; sequence TIVNINAILLLAVAVFVHGYF.

The protein belongs to the sodium:solute symporter (SSF) (TC 2.A.21) family. As to expression, kidney, intestine, liver, skeletal muscle and spleen.

It is found in the cell membrane. The enzyme catalyses D-glucose(out) + 2 Na(+)(out) = D-glucose(in) + 2 Na(+)(in). Its activity is regulated as follows. Inhibited by phlorizin. Low-affinity sodium/D-glucose symporter with a great selectivity for sugars (D-glucose &gt;&gt; D-galactose). Na(+) and D-glucose transport are tightly coupled at neutral pH, but at acidic pH, ion transport is uncoupled from sugar transport. This Sus scrofa (Pig) protein is Solute carrier family 5 member 4.